The chain runs to 96 residues: Co-chaperonin GroES (96 aa).

It belongs to the GroES chaperonin family. Heptamer of 7 subunits arranged in a ring. Interacts with the chaperonin GroEL.

It localises to the cytoplasm. Functionally, together with the chaperonin GroEL, plays an essential role in assisting protein folding. The GroEL-GroES system forms a nano-cage that allows encapsulation of the non-native substrate proteins and provides a physical environment optimized to promote and accelerate protein folding. GroES binds to the apical surface of the GroEL ring, thereby capping the opening of the GroEL channel. In Hydrogenobaculum sp. (strain Y04AAS1), this protein is Co-chaperonin GroES.